Consider the following 324-residue polypeptide: Beta-ketoacyl-[acyl-carrier-protein] synthase III (324 aa).

Catalysis depends on residues cysteine 112 and histidine 249. The interval 250-254 (QANRR) is ACP-binding. Asparagine 279 is a catalytic residue.

This sequence belongs to the thiolase-like superfamily. FabH family. In terms of assembly, homodimer.

The protein resides in the cytoplasm. The catalysed reaction is malonyl-[ACP] + acetyl-CoA + H(+) = 3-oxobutanoyl-[ACP] + CO2 + CoA. The protein operates within lipid metabolism; fatty acid biosynthesis. Catalyzes the condensation reaction of fatty acid synthesis by the addition to an acyl acceptor of two carbons from malonyl-ACP. Catalyzes the first condensation reaction which initiates fatty acid synthesis and may therefore play a role in governing the total rate of fatty acid production. Possesses both acetoacetyl-ACP synthase and acetyl transacylase activities. Its substrate specificity determines the biosynthesis of branched-chain and/or straight-chain of fatty acids. This is Beta-ketoacyl-[acyl-carrier-protein] synthase III from Streptococcus pyogenes serotype M4 (strain MGAS10750).